Consider the following 274-residue polypeptide: NH(3)-dependent NAD(+) synthetase (274 aa).

46–53 contributes to the ATP binding site; it reads GISGGQDS. Asp-52 contributes to the Mg(2+) binding site. Arg-140 contributes to the deamido-NAD(+) binding site. Thr-160 is a binding site for ATP. Glu-165 contacts Mg(2+). Deamido-NAD(+) is bound by residues Lys-173 and Asp-180. Lys-189 and Thr-211 together coordinate ATP. Position 260 to 261 (260 to 261) interacts with deamido-NAD(+); the sequence is HK.

It belongs to the NAD synthetase family. As to quaternary structure, homodimer.

It carries out the reaction deamido-NAD(+) + NH4(+) + ATP = AMP + diphosphate + NAD(+) + H(+). The protein operates within cofactor biosynthesis; NAD(+) biosynthesis; NAD(+) from deamido-NAD(+) (ammonia route): step 1/1. Its function is as follows. Catalyzes the ATP-dependent amidation of deamido-NAD to form NAD. Uses ammonia as a nitrogen source. The chain is NH(3)-dependent NAD(+) synthetase from Pectobacterium atrosepticum (strain SCRI 1043 / ATCC BAA-672) (Erwinia carotovora subsp. atroseptica).